Reading from the N-terminus, the 452-residue chain is UPF0761 membrane protein Bpet3042 (452 aa).

The next 6 helical transmembrane spans lie at 56 to 76, 114 to 134, 153 to 173, 195 to 215, 225 to 245, and 259 to 279; these read VLGI…FPVF, LTAI…MTID, ALVY…SLWA, AISF…FVVV, ALVG…AFAY, and AFAT…AVLF.

Belongs to the UPF0761 family.

The protein resides in the cell inner membrane. The polypeptide is UPF0761 membrane protein Bpet3042 (Bordetella petrii (strain ATCC BAA-461 / DSM 12804 / CCUG 43448)).